The primary structure comprises 148 residues: Deoxyuridine 5'-triphosphate nucleotidohydrolase (148 aa).

Residues 67–69, asparagine 80, 84–86, and methionine 94 contribute to the substrate site; these read RSG and LID.

The protein belongs to the dUTPase family. Requires Mg(2+) as cofactor.

It carries out the reaction dUTP + H2O = dUMP + diphosphate + H(+). It functions in the pathway pyrimidine metabolism; dUMP biosynthesis; dUMP from dCTP (dUTP route): step 2/2. In terms of biological role, this enzyme is involved in nucleotide metabolism: it produces dUMP, the immediate precursor of thymidine nucleotides and it decreases the intracellular concentration of dUTP so that uracil cannot be incorporated into DNA. This Burkholderia ambifaria (strain ATCC BAA-244 / DSM 16087 / CCUG 44356 / LMG 19182 / AMMD) (Burkholderia cepacia (strain AMMD)) protein is Deoxyuridine 5'-triphosphate nucleotidohydrolase.